The primary structure comprises 162 residues: Probable chorismate pyruvate-lyase (162 aa).

Residues Arg-54, Leu-92, and Glu-149 each contribute to the substrate site.

Belongs to the UbiC family.

It is found in the cytoplasm. The catalysed reaction is chorismate = 4-hydroxybenzoate + pyruvate. Its pathway is cofactor biosynthesis; ubiquinone biosynthesis. Its function is as follows. Removes the pyruvyl group from chorismate, with concomitant aromatization of the ring, to provide 4-hydroxybenzoate (4HB) for the ubiquinone pathway. The sequence is that of Probable chorismate pyruvate-lyase from Methylococcus capsulatus (strain ATCC 33009 / NCIMB 11132 / Bath).